A 179-amino-acid polypeptide reads, in one-letter code: uncharacterized protein (179 aa).

A run of 4 helical transmembrane segments spans residues 9 to 31 (WILV…VSTL), 41 to 63 (AFLL…YGSF), 114 to 136 (AYYG…LLGA), and 146 to 168 (AFWG…NYLM).

It localises to the cell membrane. This is an uncharacterized protein from Aquifex aeolicus (strain VF5).